The primary structure comprises 353 residues: UDP-galactose transporter (353 aa).

The next 6 helical transmembrane spans lie at L147–L167, V184–F204, L215–L235, I254–A274, I279–L299, and F302–Y322. The tract at residues P325–H353 is disordered. Polar residues predominate over residues P329–D343.

Belongs to the nucleotide-sugar transporter family. SLC35A subfamily.

It is found in the golgi apparatus membrane. Its function is as follows. Essential for the transport of UDP-galactose into the lumen of Golgi apparatus. This Schizosaccharomyces pombe (strain 972 / ATCC 24843) (Fission yeast) protein is UDP-galactose transporter (gms1).